The chain runs to 210 residues: Shikimate kinase (210 aa).

34–39 (GAGKSV) lines the ATP pocket. Serine 38 lines the Mg(2+) pocket. Substrate contacts are provided by aspartate 56, arginine 80, and glycine 102. Arginine 140 provides a ligand contact to ATP. Position 159 (arginine 159) interacts with substrate.

It belongs to the shikimate kinase family. Monomer. Mg(2+) serves as cofactor.

The protein localises to the cytoplasm. The enzyme catalyses shikimate + ATP = 3-phosphoshikimate + ADP + H(+). It functions in the pathway metabolic intermediate biosynthesis; chorismate biosynthesis; chorismate from D-erythrose 4-phosphate and phosphoenolpyruvate: step 5/7. Its function is as follows. Catalyzes the specific phosphorylation of the 3-hydroxyl group of shikimic acid using ATP as a cosubstrate. This Bartonella quintana (strain Toulouse) (Rochalimaea quintana) protein is Shikimate kinase.